We begin with the raw amino-acid sequence, 299 residues long: Ethylmalonyl-CoA decarboxylase (299 aa).

It belongs to the enoyl-CoA hydratase/isomerase family.

The protein localises to the cytoplasm. It localises to the cytosol. The enzyme catalyses (2S)-ethylmalonyl-CoA + H(+) = butanoyl-CoA + CO2. It catalyses the reaction (S)-methylmalonyl-CoA + H(+) = propanoyl-CoA + CO2. The catalysed reaction is (2R)-ethylmalonyl-CoA + H(+) = butanoyl-CoA + CO2. In terms of biological role, decarboxylates ethylmalonyl-CoA, a potentially toxic metabolite, to form butyryl-CoA, suggesting it might be involved in metabolite proofreading. Acts preferentially on (S)-ethylmalonyl-CoA but also has some activity on the (R)-isomer. Also has methylmalonyl-CoA decarboxylase activity at lower level. This is Ethylmalonyl-CoA decarboxylase (echdc1) from Xenopus tropicalis (Western clawed frog).